A 328-amino-acid polypeptide reads, in one-letter code: Tetraacyldisaccharide 4'-kinase (328 aa).

Position 59 to 66 (59 to 66 (TAGGNGKT)) interacts with ATP.

This sequence belongs to the LpxK family.

It carries out the reaction a lipid A disaccharide + ATP = a lipid IVA + ADP + H(+). Its pathway is glycolipid biosynthesis; lipid IV(A) biosynthesis; lipid IV(A) from (3R)-3-hydroxytetradecanoyl-[acyl-carrier-protein] and UDP-N-acetyl-alpha-D-glucosamine: step 6/6. In terms of biological role, transfers the gamma-phosphate of ATP to the 4'-position of a tetraacyldisaccharide 1-phosphate intermediate (termed DS-1-P) to form tetraacyldisaccharide 1,4'-bis-phosphate (lipid IVA). The sequence is that of Tetraacyldisaccharide 4'-kinase from Aliivibrio fischeri (strain ATCC 700601 / ES114) (Vibrio fischeri).